The chain runs to 125 residues: Fumarate reductase subunit D (125 aa).

A run of 3 helical transmembrane segments spans residues 30-50 (FAMLTPITVLVLGILVPLGVI), 62-82 (AFATSIIGALFIIGTLALPMW), and 105-125 (VACYAFAGLITALAVIFIFMI).

Belongs to the FrdD family. In terms of assembly, part of an enzyme complex containing four subunits: a flavoprotein (FrdA), an iron-sulfur protein (FrdB), and two hydrophobic anchor proteins (FrdC and FrdD).

Its subcellular location is the cell inner membrane. Anchors the catalytic components of the fumarate reductase complex to the cell membrane, binds quinones. This is Fumarate reductase subunit D from Vibrio parahaemolyticus serotype O3:K6 (strain RIMD 2210633).